A 124-amino-acid chain; its full sequence is ATP synthase epsilon chain (124 aa).

It belongs to the ATPase epsilon chain family. F-type ATPases have 2 components, CF(1) - the catalytic core - and CF(0) - the membrane proton channel. CF(1) has five subunits: alpha(3), beta(3), gamma(1), delta(1), epsilon(1). CF(0) has three main subunits: a, b and c.

Its subcellular location is the cell membrane. Produces ATP from ADP in the presence of a proton gradient across the membrane. In Streptomyces avermitilis (strain ATCC 31267 / DSM 46492 / JCM 5070 / NBRC 14893 / NCIMB 12804 / NRRL 8165 / MA-4680), this protein is ATP synthase epsilon chain.